The sequence spans 136 residues: HTH-type transcriptional regulator CysB (136 aa).

In terms of domain architecture, HTH lysR-type spans 1–59 (MDVRQLRSLVTLVEVRFSVSRAAECLHLVQSAVTQHLKQLEAELGTRLFVRHGKRLVGL). A DNA-binding region (H-T-H motif) is located at residues 19–38 (VSRAAECLHLVQSAVTQHLK).

This sequence belongs to the LysR transcriptional regulatory family.

Its function is as follows. This protein is a positive regulator of gene expression for the cysteine regulon. The protein is HTH-type transcriptional regulator CysB (cysB) of Thiocapsa roseopersicina.